The sequence spans 233 residues: MAKLTKRARLIREKVEVTKNYDINEAVALLKELATAKFVESVDVAVNLGVDPRKSDQNVRGATVLPHGTGREVRVAVFTQGANAEAATAAGAELVGMDELAAQVKAGEMNFDVVIASPDAMRVVGQLGQILGPRGLMPNPKTGTVTPNVAEAVKNAKAGQVRYRNDKNGIIHTTIGKVDFETAQLKENLEALLAALKKAKPAAAKGVFLKKVSISTTMGAGVAVDQSTLEDVK.

Belongs to the universal ribosomal protein uL1 family. As to quaternary structure, part of the 50S ribosomal subunit.

Functionally, binds directly to 23S rRNA. The L1 stalk is quite mobile in the ribosome, and is involved in E site tRNA release. Its function is as follows. Protein L1 is also a translational repressor protein, it controls the translation of the L11 operon by binding to its mRNA. The chain is Large ribosomal subunit protein uL1 from Shewanella piezotolerans (strain WP3 / JCM 13877).